Reading from the N-terminus, the 446-residue chain is N-succinylarginine dihydrolase (446 aa).

Residues alanine 19–serine 28, asparagine 110, and histidine 137–arginine 138 each bind substrate. Glutamate 174 is an active-site residue. Arginine 213 contributes to the substrate binding site. Histidine 249 is a catalytic residue. Residues aspartate 251 and asparagine 364 each contribute to the substrate site. The active-site Nucleophile is cysteine 370.

The protein belongs to the succinylarginine dihydrolase family. Homodimer.

The catalysed reaction is N(2)-succinyl-L-arginine + 2 H2O + 2 H(+) = N(2)-succinyl-L-ornithine + 2 NH4(+) + CO2. The protein operates within amino-acid degradation; L-arginine degradation via AST pathway; L-glutamate and succinate from L-arginine: step 2/5. Its function is as follows. Catalyzes the hydrolysis of N(2)-succinylarginine into N(2)-succinylornithine, ammonia and CO(2). The chain is N-succinylarginine dihydrolase from Burkholderia mallei (strain NCTC 10247).